Reading from the N-terminus, the 867-residue chain is Nuclear body protein SP140 (867 aa).

In terms of domain architecture, HSR spans 22–138; it reads VAEIQNVEGQ…IYRSFQNVCY (117 aa). 3 disordered regions span residues 260 to 341, 365 to 432, and 486 to 580; these read TYST…EEPQ, TPQV…SEEL, and IANN…KHKD. The span at 268-301 shows a compositional bias: basic and acidic residues; the sequence is KQGEEEGRNSPRKRNQDKEKYQESPEGRDKETFD. Composition is skewed to acidic residues over residues 323 to 341 and 384 to 397; these read EGEE…EEPQ and EGEE…EMCD. The span at 404 to 416 shows a compositional bias: low complexity; it reads ASSSLARRGSVSS. Composition is skewed to basic residues over residues 494–512 and 567–577; these read KPKR…RMRM and QKRVRSRASRK. Positions 495–514 match the Nuclear localization signal motif; it reads PKRKRRKKRGHGWSRMRMRR. The SAND domain maps to 580–661; the sequence is DETVDFKAPL…RWLMENGFLP (82 aa). The PHD-type zinc-finger motif lies at 690–736; that stretch reads LDECEVCRDGGELFCCDTCSRVFHEDCHIPPVEAERTPWNCIFCRMK. Position 726 is a phosphothreonine (Thr726). The Bromo domain occupies 754–857; it reads QMCPEEQLKC…AEFEKNFKEV (104 aa).

As to quaternary structure, interacts with PIN1. Post-translationally, phosphorylation at Thr-726 promotes binding of PIN1 and subsequent isomerization of Pro-727. In terms of tissue distribution, high levels in spleen and peripheral blood leukocytes, much lower levels in tonsils, thymus, prostate, ovary, small intestine, and colon. Very low levels in heart, brain, placenta, lung, liver, skeletal muscle, kidney, and pancreas. Not detected in brain, liver and muscle.

The protein resides in the nucleus. Its subcellular location is the PML body. It localises to the cytoplasm. In terms of biological role, component of the nuclear body, also known as nuclear domain 10, PML oncogenic domain, and KR body. May be involved in the pathogenesis of acute promyelocytic leukemia and viral infection. May play a role in chromatin-mediated regulation of gene expression although it does not bind to histone H3 tails. The polypeptide is Nuclear body protein SP140 (Homo sapiens (Human)).